The following is a 950-amino-acid chain: Glycine dehydrogenase (decarboxylating) (950 aa).

K698 bears the N6-(pyridoxal phosphate)lysine mark.

Belongs to the GcvP family. As to quaternary structure, the glycine cleavage system is composed of four proteins: P, T, L and H. The cofactor is pyridoxal 5'-phosphate.

It carries out the reaction N(6)-[(R)-lipoyl]-L-lysyl-[glycine-cleavage complex H protein] + glycine + H(+) = N(6)-[(R)-S(8)-aminomethyldihydrolipoyl]-L-lysyl-[glycine-cleavage complex H protein] + CO2. The glycine cleavage system catalyzes the degradation of glycine. The P protein binds the alpha-amino group of glycine through its pyridoxal phosphate cofactor; CO(2) is released and the remaining methylamine moiety is then transferred to the lipoamide cofactor of the H protein. This is Glycine dehydrogenase (decarboxylating) from Neisseria gonorrhoeae (strain NCCP11945).